Reading from the N-terminus, the 596-residue chain is Ferredoxin--nitrite reductase, chloroplastic (596 aa).

A chloroplast-targeting transit peptide spans Met-1–Arg-28. Positions Met-1–Leu-56 are disordered. Low complexity predominate over residues Pro-31–Ala-47. [4Fe-4S] cluster contacts are provided by Cys-474, Cys-480, Cys-515, and Cys-519. Cys-519 is a binding site for siroheme.

Belongs to the nitrite and sulfite reductase 4Fe-4S domain family. Monomer. Siroheme serves as cofactor. It depends on [4Fe-4S] cluster as a cofactor.

The protein localises to the plastid. Its subcellular location is the chloroplast. The catalysed reaction is 6 oxidized [2Fe-2S]-[ferredoxin] + NH4(+) + 2 H2O = nitrite + 6 reduced [2Fe-2S]-[ferredoxin] + 8 H(+). It functions in the pathway nitrogen metabolism; nitrate reduction (assimilation). In terms of biological role, catalyzes the six-electron reduction of nitrite to ammonium. The polypeptide is Ferredoxin--nitrite reductase, chloroplastic (Oryza sativa subsp. japonica (Rice)).